Reading from the N-terminus, the 641-residue chain is Threonine--tRNA ligase (641 aa).

The region spanning Met-1–Thr-61 is the TGS domain. The tract at residues Asp-240–Pro-538 is catalytic. Zn(2+) contacts are provided by Cys-334, His-385, and His-515.

Belongs to the class-II aminoacyl-tRNA synthetase family. As to quaternary structure, homodimer. Requires Zn(2+) as cofactor.

It localises to the cytoplasm. The catalysed reaction is tRNA(Thr) + L-threonine + ATP = L-threonyl-tRNA(Thr) + AMP + diphosphate + H(+). Functionally, catalyzes the attachment of threonine to tRNA(Thr) in a two-step reaction: L-threonine is first activated by ATP to form Thr-AMP and then transferred to the acceptor end of tRNA(Thr). Also edits incorrectly charged L-seryl-tRNA(Thr). This chain is Threonine--tRNA ligase, found in Aster yellows witches'-broom phytoplasma (strain AYWB).